The primary structure comprises 126 residues: Adenosine 5'-monophosphoramidase HINT1 (126 aa).

Residue alanine 2 is modified to N-acetylalanine. One can recognise an HIT domain in the interval isoleucine 18–glycine 126. N6-acetyllysine occurs at positions 21 and 30. Residue aspartate 43 to isoleucine 44 participates in AMP binding. Serine 45 and serine 72 each carry phosphoserine. Residues asparagine 99, glycine 105 to serine 107, and histidine 112 to histidine 114 contribute to the AMP site. Residues histidine 110–histidine 114 carry the Histidine triad motif motif. Histidine 112 acts as the Tele-AMP-histidine intermediate in catalysis.

It belongs to the HINT family. As to quaternary structure, homodimer. Interacts with CDK7. Interacts with RUVBL1 and RUVBL2 and is associated with the LEF1/TCF1-CTNNB1 complex and with a KAT5 histone acetyltransferase complex. Identified in a complex with MITF and CTNNB1. Interacts with CDC34 and RBX1, and is part of a SCF (SKP2-CUL1-F-box protein) E3 ubiquitin-protein ligase complex. Interacts with SUMO1, SUMO2 and RGS17. Interacts with the Ten-1 ICD form of TENM1. Interacts with CALM1; interaction increases in the presence of calcium ions. In terms of tissue distribution, widely expressed.

It is found in the cytoplasm. Its subcellular location is the nucleus. The enzyme catalyses adenosine 5'-phosphoramidate + H2O = AMP + NH4(+). In terms of biological role, exhibits adenosine 5'-monophosphoramidase activity, hydrolyzing purine nucleotide phosphoramidates with a single phosphate group such as adenosine 5'monophosphoramidate (AMP-NH2) to yield AMP and NH2. Hydrolyzes adenosine 5'monophosphomorpholidate (AMP-morpholidate) and guanosine 5'monophosphomorpholidate (GMP-morpholidate). Hydrolyzes lysyl-AMP (AMP-N-epsilon-(N-alpha-acetyl lysine methyl ester)) generated by lysine tRNA ligase, as well as Met-AMP, His-AMP and Asp-AMP, lysyl-GMP (GMP-N-epsilon-(N-alpha-acetyl lysine methyl ester)) and AMP-N-alanine methyl ester. Hydrolyzes 3-indolepropionic acyl-adenylate, tryptamine adenosine phosphoramidate monoester and other fluorogenic purine nucleoside tryptamine phosphoramidates in vitro. Can also convert adenosine 5'-O-phosphorothioate and guanosine 5'-O-phosphorothioate to the corresponding nucleoside 5'-O-phosphates with concomitant release of hydrogen sulfide. In addition, functions as scaffolding protein that modulates transcriptional activation by the LEF1/TCF1-CTNNB1 complex and by the complex formed with MITF and CTNNB1. Modulates p53/TP53 levels and p53/TP53-mediated apoptosis. Modulates proteasomal degradation of target proteins by the SCF (SKP2-CUL1-F-box protein) E3 ubiquitin-protein ligase complex. Also exhibits SUMO-specific isopeptidase activity, deconjugating SUMO1 from RGS17. Deconjugates SUMO1 from RANGAP1. This is Adenosine 5'-monophosphoramidase HINT1 (HINT1) from Homo sapiens (Human).